The following is a 338-amino-acid chain: Beta-ketoacyl-[acyl-carrier-protein] synthase III 2 (338 aa).

Catalysis depends on residues Cys-119 and His-255. Residues 256-260 are ACP-binding; sequence QANIR. Asn-285 is a catalytic residue.

It belongs to the thiolase-like superfamily. FabH family. As to quaternary structure, homodimer.

It is found in the cytoplasm. It carries out the reaction malonyl-[ACP] + acetyl-CoA + H(+) = 3-oxobutanoyl-[ACP] + CO2 + CoA. It functions in the pathway lipid metabolism; fatty acid biosynthesis. In terms of biological role, catalyzes the condensation reaction of fatty acid synthesis by the addition to an acyl acceptor of two carbons from malonyl-ACP. Catalyzes the first condensation reaction which initiates fatty acid synthesis and may therefore play a role in governing the total rate of fatty acid production. Possesses both acetoacetyl-ACP synthase and acetyl transacylase activities. Its substrate specificity determines the biosynthesis of branched-chain and/or straight-chain of fatty acids. This is Beta-ketoacyl-[acyl-carrier-protein] synthase III 2 from Deinococcus radiodurans (strain ATCC 13939 / DSM 20539 / JCM 16871 / CCUG 27074 / LMG 4051 / NBRC 15346 / NCIMB 9279 / VKM B-1422 / R1).